Reading from the N-terminus, the 1128-residue chain is Major DNA-binding protein (1128 aa).

The segment at 1104–1128 (LGGGGQGSGGRRKRRLATVLPGLEV) is required for nuclear localization.

This sequence belongs to the herpesviridae major DNA-binding protein family. Homooligomers. Forms double-helical filaments necessary for the formation of replication compartments within the host nucleus. Interacts with the origin-binding protein. Interacts with the helicase primase complex; this interaction stimulates primer synthesis activity of the helicase-primase complex. Interacts with the DNA polymerase. Interacts with the alkaline exonuclease; this interaction increases its nuclease processivity.

It localises to the virion tegument. Its subcellular location is the host nucleus. Its function is as follows. Plays several crucial roles in viral infection. Participates in the opening of the viral DNA origin to initiate replication by interacting with the origin-binding protein. May disrupt loops, hairpins and other secondary structures present on ssDNA to reduce and eliminate pausing of viral DNA polymerase at specific sites during elongation. Promotes viral DNA recombination by performing strand-transfer, characterized by the ability to transfer a DNA strand from a linear duplex to a complementary single-stranded DNA circle. Can also catalyze the renaturation of complementary single strands. Additionally, reorganizes the host cell nucleus, leading to the formation of prereplicative sites and replication compartments. This process is driven by the protein which can form double-helical filaments in the absence of DNA. The chain is Major DNA-binding protein from Epstein-Barr virus (strain GD1) (HHV-4).